Here is a 649-residue protein sequence, read N- to C-terminus: Sodium/nucleoside cotransporter 1 (649 aa).

Residues 1–80 are Cytoplasmic-facing; it reads MENDPSRRRE…ARSFCREHMQ (80 aa). Residues 81 to 104 form a helical membrane-spanning segment; sequence LFRWIGTGLLCTGLSAFLLVACLL. Residues 105-109 lie on the Extracellular side of the membrane; sequence DFQRA. A helical membrane pass occupies residues 110 to 128; that stretch reads LALFVLTCVVLTFLGHRLL. The Cytoplasmic portion of the chain corresponds to 129-147; it reads KRLLGPKLRRFLKPQGHPR. Residues 148–167 form a helical membrane-spanning segment; the sequence is LLLWFKRGLALAAFLGLVLW. Topologically, residues 168 to 178 are extracellular; sequence LSLDTSQRPEQ. A helical membrane pass occupies residues 179-195; sequence LVSFAGICVFVALLFAC. The Cytoplasmic segment spans residues 196-201; that stretch reads SKHHCA. Residues 202–222 form a helical membrane-spanning segment; sequence VSWRAVSWGLGLQFVLGLLVI. Residues 223–261 are Extracellular-facing; it reads RTEPGFIAFEWLGEQIRIFLSYTKAGSSFVFGEALVKDV. The chain crosses the membrane as a helical span at residues 262–283; sequence FAFQVLPIIVFFSCVISVLYHV. Residues 284 to 294 lie on the Cytoplasmic side of the membrane; sequence GLMQWVILKIA. Residues 295–318 traverse the membrane as a helical segment; sequence WLMQVTMGTTATETLSVAGNIFVS. Residues 319-337 are Extracellular-facing; the sequence is QTEAPLLIRPYLADMTLSE. Residues 338 to 360 traverse the membrane as a helical segment; it reads VHVVMTGGYATIAGSLLGAYISF. The Cytoplasmic portion of the chain corresponds to 361-366; that stretch reads GIDATS. Residues 367-386 form a helical membrane-spanning segment; sequence LIAASVMAAPCALALSKLVY. Over 387–423 the chain is Extracellular; that stretch reads PEVEESKFRREEGVKLTYGDAQNLIEAASTGAAISVK. Residues 424–446 traverse the membrane as a helical segment; sequence VVANIAANLIAFLAVLDFINAAL. The Cytoplasmic segment spans residues 447–457; the sequence is SWLGDMVDIQG. Residues 458–479 form a helical membrane-spanning segment; that stretch reads LSFQLICSYILRPVAFLMGVAW. At 480–534 the chain is on the extracellular side; that stretch reads EDCPVVAELLGIKLFLNEFVAYQDLSKYKQRRLAGAEEWVGDRKQWISVRAEVLT. The chain crosses the membrane as a helical span at residues 535–558; that stretch reads TFALCGFANFSSIGIMLGGLTSMV. Residues 559–569 are Cytoplasmic-facing; sequence PQRKSDFSQIV. Residues 570-592 form a helical membrane-spanning segment; it reads LRALFTGACVSLVNACMAGILYM. The Extracellular portion of the chain corresponds to 593 to 649; the sequence is PRGAEVDCMSLLNTTLSSSSFEIYQCCREAFQSVNPEFSPEALDNCCRFYNHTICAQ. N-linked (GlcNAc...) asparagine glycosylation is found at N605 and N643.

The protein belongs to the concentrative nucleoside transporter (CNT) (TC 2.A.41) family. In terms of processing, N-glycosylated. N-glycosylation is required for localization to the plasma membrane and the transporter activity. Expressed in kidney.

It is found in the cell membrane. Its subcellular location is the apical cell membrane. It carries out the reaction uridine(out) + Na(+)(out) = uridine(in) + Na(+)(in). It catalyses the reaction thymidine(out) + Na(+)(out) = thymidine(in) + Na(+)(in). The catalysed reaction is cytidine(out) + Na(+)(out) = cytidine(in) + Na(+)(in). The enzyme catalyses adenosine(out) + Na(+)(out) = adenosine(in) + Na(+)(in). Due to its high apparent affinity but slow transport, adenosine could act as a negative regulator of pyrimidine transport under some conditions. Sodium and pyrimidine nucleoside symporter of the plasma membrane that imports uridine, thymidine and cytidine into cells by coupling their transport to the transmembrane sodium electrochemical gradient. Also transports adenosine, an atypical substrate transported with high apparent affinity, but low maximum velocity. Therefore, exhibits the transport characteristics of the nucleoside transport system cit or N2 subtype (N2/cit). Involved in renal nucleoside (re)absorption. This chain is Sodium/nucleoside cotransporter 1, found in Homo sapiens (Human).